Reading from the N-terminus, the 206-residue chain is Small ribosomal subunit protein uS4 (206 aa).

The 61-residue stretch at 96–156 folds into the S4 RNA-binding domain; the sequence is CRLDNVVYRM…EKSLNQLRIV (61 aa).

The protein belongs to the universal ribosomal protein uS4 family. In terms of assembly, part of the 30S ribosomal subunit. Contacts protein S5. The interaction surface between S4 and S5 is involved in control of translational fidelity.

In terms of biological role, one of the primary rRNA binding proteins, it binds directly to 16S rRNA where it nucleates assembly of the body of the 30S subunit. Functionally, with S5 and S12 plays an important role in translational accuracy. The sequence is that of Small ribosomal subunit protein uS4 from Pseudomonas entomophila (strain L48).